Reading from the N-terminus, the 279-residue chain is Acetylglutamate kinase (279 aa).

Substrate is bound by residues 64-65, Arg-86, and Asn-177; that span reads GG.

Belongs to the acetylglutamate kinase family. ArgB subfamily.

Its subcellular location is the cytoplasm. It carries out the reaction N-acetyl-L-glutamate + ATP = N-acetyl-L-glutamyl 5-phosphate + ADP. The protein operates within amino-acid biosynthesis; L-arginine biosynthesis; N(2)-acetyl-L-ornithine from L-glutamate: step 2/4. Functionally, catalyzes the ATP-dependent phosphorylation of N-acetyl-L-glutamate. The chain is Acetylglutamate kinase from Campylobacter jejuni subsp. jejuni serotype O:6 (strain 81116 / NCTC 11828).